The sequence spans 123 residues: Small ribosomal subunit protein uS12 (123 aa).

D89 bears the 3-methylthioaspartic acid mark. The segment at 100 to 123 (GSLDTSGVKDRKQGRSKYGTKRPK) is disordered. The span at 113–123 (GRSKYGTKRPK) shows a compositional bias: basic residues.

It belongs to the universal ribosomal protein uS12 family. Part of the 30S ribosomal subunit. Contacts proteins S8 and S17. May interact with IF1 in the 30S initiation complex.

In terms of biological role, with S4 and S5 plays an important role in translational accuracy. Interacts with and stabilizes bases of the 16S rRNA that are involved in tRNA selection in the A site and with the mRNA backbone. Located at the interface of the 30S and 50S subunits, it traverses the body of the 30S subunit contacting proteins on the other side and probably holding the rRNA structure together. The combined cluster of proteins S8, S12 and S17 appears to hold together the shoulder and platform of the 30S subunit. This Ectopseudomonas mendocina (strain ymp) (Pseudomonas mendocina) protein is Small ribosomal subunit protein uS12.